The sequence spans 229 residues: Protein-L-isoaspartate O-methyltransferase (229 aa).

Ser74 is an active-site residue.

The protein belongs to the methyltransferase superfamily. L-isoaspartyl/D-aspartyl protein methyltransferase family.

It localises to the cytoplasm. It carries out the reaction [protein]-L-isoaspartate + S-adenosyl-L-methionine = [protein]-L-isoaspartate alpha-methyl ester + S-adenosyl-L-homocysteine. In terms of biological role, catalyzes the methyl esterification of L-isoaspartyl residues in peptides and proteins that result from spontaneous decomposition of normal L-aspartyl and L-asparaginyl residues. It plays a role in the repair and/or degradation of damaged proteins. The polypeptide is Protein-L-isoaspartate O-methyltransferase (Pelotomaculum thermopropionicum (strain DSM 13744 / JCM 10971 / SI)).